Consider the following 615-residue polypeptide: Chromosomal replication initiator protein DnaA (615 aa).

Residues 1 to 88 (MSEGQINLAM…RVAVTVDPSA (88 aa)) are domain I, interacts with DnaA modulators. The interval 85 to 272 (DPSAVPPSAP…PTSGGPDQLN (188 aa)) is disordered. A domain II region spans residues 88 to 269 (AVPPSAPTEE…STNPTSGGPD (182 aa)). 2 stretches are compositionally biased toward low complexity: residues 94 to 112 (PTEE…PAPD) and 173 to 190 (PSSA…VAES). The domain III, AAA+ region stretch occupies residues 270–486 (QLNPKYTFDT…GALIRVTAFA (217 aa)). Positions 314, 316, 317, and 318 each coordinate ATP. The domain IV, binds dsDNA stretch occupies residues 487–615 (SLNRQSVDLH…QQAHHNHHHL (129 aa)).

Belongs to the DnaA family. In terms of assembly, oligomerizes as a right-handed, spiral filament on DNA at oriC.

Its subcellular location is the cytoplasm. Plays an essential role in the initiation and regulation of chromosomal replication. ATP-DnaA binds to the origin of replication (oriC) to initiate formation of the DNA replication initiation complex once per cell cycle. Binds the DnaA box (a 9 base pair repeat at the origin) and separates the double-stranded (ds)DNA. Forms a right-handed helical filament on oriC DNA; dsDNA binds to the exterior of the filament while single-stranded (ss)DNA is stabiized in the filament's interior. The ATP-DnaA-oriC complex binds and stabilizes one strand of the AT-rich DNA unwinding element (DUE), permitting loading of DNA polymerase. After initiation quickly degrades to an ADP-DnaA complex that is not apt for DNA replication. Binds acidic phospholipids. The sequence is that of Chromosomal replication initiator protein DnaA from Thermobifida fusca (strain YX).